Reading from the N-terminus, the 139-residue chain is Holo-[acyl-carrier-protein] synthase (139 aa).

Residues D8 and E61 each coordinate Mg(2+).

It belongs to the P-Pant transferase superfamily. AcpS family. Mg(2+) serves as cofactor.

The protein resides in the cytoplasm. It catalyses the reaction apo-[ACP] + CoA = holo-[ACP] + adenosine 3',5'-bisphosphate + H(+). Functionally, transfers the 4'-phosphopantetheine moiety from coenzyme A to a Ser of acyl-carrier-protein. This chain is Holo-[acyl-carrier-protein] synthase, found in Bradyrhizobium diazoefficiens (strain JCM 10833 / BCRC 13528 / IAM 13628 / NBRC 14792 / USDA 110).